The chain runs to 355 residues: MAVTANVGTIFPVVWAGDRVQLIDQTRLPEQYELREITTAAEMATAIRTMIVRGAPAIGVAAAFGMVLGAREYRGSDREGFLIHLENIASQLRQTRPTAVNLFWAIDRLLAAAQQPTPTLEELQQHLLETAQTIAREDVQTCQAIGKNGLGVLPKTPEKLRLLTHCNAGALATAGYGTALGVVRAAWAAGRLERLYADETRPRLQGAKLTAWECVQEGIPVTLIADTMAAHCMQRGMIDAVVVGADRIALNGDTANKIGTYSVALAAKAHNIPFFVAAPLSTIDTSIATGAEIPIEERHPQEIYQVGFSRITPAGVDFYNPAFDVTPAHLISGIITELGVFAPVDLARGIGAVSG.

Substrate contacts are provided by residues 53–55 (RGA), arginine 96, and glutamine 205. Aspartate 246 acts as the Proton donor in catalysis. Position 256-257 (256-257 (NK)) interacts with substrate.

This sequence belongs to the eIF-2B alpha/beta/delta subunits family. MtnA subfamily.

The catalysed reaction is 5-(methylsulfanyl)-alpha-D-ribose 1-phosphate = 5-(methylsulfanyl)-D-ribulose 1-phosphate. It participates in amino-acid biosynthesis; L-methionine biosynthesis via salvage pathway; L-methionine from S-methyl-5-thio-alpha-D-ribose 1-phosphate: step 1/6. Functionally, catalyzes the interconversion of methylthioribose-1-phosphate (MTR-1-P) into methylthioribulose-1-phosphate (MTRu-1-P). This Thermosynechococcus vestitus (strain NIES-2133 / IAM M-273 / BP-1) protein is Methylthioribose-1-phosphate isomerase.